The sequence spans 366 residues: Aminomethyltransferase (366 aa).

The protein belongs to the GcvT family. The glycine cleavage system is composed of four proteins: P, T, L and H.

It catalyses the reaction N(6)-[(R)-S(8)-aminomethyldihydrolipoyl]-L-lysyl-[protein] + (6S)-5,6,7,8-tetrahydrofolate = N(6)-[(R)-dihydrolipoyl]-L-lysyl-[protein] + (6R)-5,10-methylene-5,6,7,8-tetrahydrofolate + NH4(+). In terms of biological role, the glycine cleavage system catalyzes the degradation of glycine. The protein is Aminomethyltransferase of Bacillus cereus (strain ATCC 10987 / NRS 248).